The sequence spans 95 residues: UPF0235 protein Swoo_1329 (95 aa).

Belongs to the UPF0235 family.

This Shewanella woodyi (strain ATCC 51908 / MS32) protein is UPF0235 protein Swoo_1329.